The sequence spans 396 residues: Ribosomal RNA large subunit methyltransferase I (396 aa).

Positions 2–79 (AVRIKLKPGR…REEEIDREFF (78 aa)) constitute a PUA domain.

The protein belongs to the methyltransferase superfamily. RlmI family.

It localises to the cytoplasm. The catalysed reaction is cytidine(1962) in 23S rRNA + S-adenosyl-L-methionine = 5-methylcytidine(1962) in 23S rRNA + S-adenosyl-L-homocysteine + H(+). In terms of biological role, specifically methylates the cytosine at position 1962 (m5C1962) of 23S rRNA. This Shewanella sp. (strain MR-4) protein is Ribosomal RNA large subunit methyltransferase I.